Here is a 209-residue protein sequence, read N- to C-terminus: Large ribosomal subunit protein uL3 (209 aa).

The tract at residues 133–153 (THGNSLSHRVPGSIGQNQTPG) is disordered. At Gln-150 the chain carries N5-methylglutamine.

Belongs to the universal ribosomal protein uL3 family. As to quaternary structure, part of the 50S ribosomal subunit. Forms a cluster with proteins L14 and L19. Post-translationally, methylated by PrmB.

In terms of biological role, one of the primary rRNA binding proteins, it binds directly near the 3'-end of the 23S rRNA, where it nucleates assembly of the 50S subunit. This is Large ribosomal subunit protein uL3 from Serratia proteamaculans (strain 568).